A 461-amino-acid chain; its full sequence is Fumarate hydratase class II (461 aa).

Residues 99–101 (SGT), Arg-127, 130–133 (HPND), 140–142 (SSN), and Thr-188 contribute to the substrate site. Residue His-189 is the Proton donor/acceptor of the active site. The active site involves Ser-319. Residues Ser-320 and 325 to 327 (KVN) contribute to the substrate site.

It belongs to the class-II fumarase/aspartase family. Fumarase subfamily. In terms of assembly, homotetramer.

Its subcellular location is the cytoplasm. The catalysed reaction is (S)-malate = fumarate + H2O. The protein operates within carbohydrate metabolism; tricarboxylic acid cycle; (S)-malate from fumarate: step 1/1. In terms of biological role, involved in the TCA cycle. Catalyzes the stereospecific interconversion of fumarate to L-malate. This chain is Fumarate hydratase class II, found in Chromobacterium violaceum (strain ATCC 12472 / DSM 30191 / JCM 1249 / CCUG 213 / NBRC 12614 / NCIMB 9131 / NCTC 9757 / MK).